Here is a 119-residue protein sequence, read N- to C-terminus: DNA-binding protein inhibitor ID-3 (119 aa).

Positions 28–80 (RGKGPAAEEPLSLLDDMNHCYSRLRELVPGVPRGTQLSQVEILQRVIDYILDL) constitute a bHLH domain.

As to quaternary structure, homodimer, and heterodimer with other HLH proteins. Interacts with COPS5 and COPS7A. Interacts with IFI204. Interacts with GATA4 and NKX2-5. Interacts with ANKRD2; both proteins cooperate in myoblast differentiation. Interacts with CLOCK and BMAL1. Expressed abundantly in lung, kidney and adrenal gland, but not in adult brain.

The protein resides in the nucleus. Its function is as follows. Transcriptional regulator (lacking a basic DNA binding domain) which negatively regulates the basic helix-loop-helix (bHLH) transcription factors by forming heterodimers and inhibiting their DNA binding and transcriptional activity. Implicated in regulating a variety of cellular processes, including cellular growth, senescence, differentiation, apoptosis, angiogenesis, and neoplastic transformation. Involved in myogenesis by inhibiting skeletal muscle and cardiac myocyte differentiation and promoting muscle precursor cells proliferation. Inhibits the binding of E2A-containing protein complexes to muscle creatine kinase E-box enhancer. Regulates the circadian clock by repressing the transcriptional activator activity of the CLOCK-BMAL1 heterodimer. This Homo sapiens (Human) protein is DNA-binding protein inhibitor ID-3 (ID3).